A 392-amino-acid polypeptide reads, in one-letter code: Isocitrate dehydrogenase [NAD] subunit gamma, mitochondrial (392 aa).

The N-terminal 39 residues, 1–39, are a transit peptide targeting the mitochondrion; sequence MALKVATAAGGAVKAALRPALLWRPWEVLGSHEAPRRSF. Citrate contacts are provided by T119 and N132. The substrate site is built by R135, R166, and D253. D253 provides a ligand contact to Mn(2+). Residues N311, T312, and N323 each coordinate ADP.

This sequence belongs to the isocitrate and isopropylmalate dehydrogenases family. In terms of assembly, heterooligomer of subunits alpha (IDH3A), beta (IDH3B), and gamma (IDH3G) in the apparent ratio of 2:1:1. The heterodimer containing one IDH3A and one IDH3B subunit and the heterodimer containing one IDH3A and one IDH3G subunit assemble into a heterotetramer (which contains two subunits of IDH3A, one of IDH3B and one of IDH3G) and further into the heterooctamer. The cofactor is Mg(2+). Mn(2+) is required as a cofactor.

The protein localises to the mitochondrion. With respect to regulation, the heterotetramer and the heterodimer composed of IDH3A and IDH3G subunits can be allosterically activated by citrate (CIT) or/and ADP, and the two activators can act independently or synergistically. The heterodimer composed of IDH3A and IDH3B subunits cannot be allosterically regulated and the allosteric regulation of the heterotetramer is through the IDH3G subunit and not the IDH3B subunit. The IDH3G subunit contains the allosteric site which consists of a CIT-binding site and an ADP-binding site, and the binding of CIT and ADP causes conformational changes at the allosteric site which are transmitted to the active site in the catalytic subunit (IDH3A) through a cascade of conformational changes at the heterodimer interface, leading to stabilization of the isocitrate-binding at the active site and thus activation of the enzyme. ATP can activate the heterotetramer and the heterodimer composed of IDH3A and IDH3G subunits at low concentrations but inhibits their activities at high concentrations, whereas ATP exhibits only inhibitory effect on the heterodimer composed of IDH3A and IDH3B subunits. Functionally, regulatory subunit which plays a role in the allosteric regulation of the enzyme catalyzing the decarboxylation of isocitrate (ICT) into alpha-ketoglutarate. The heterodimer composed of the alpha (IDH3A) and beta (IDH3B) subunits and the heterodimer composed of the alpha (IDH3A) and gamma (IDH3G) subunits, have considerable basal activity but the full activity of the heterotetramer (containing two subunits of IDH3A, one of IDH3B and one of IDH3G) requires the assembly and cooperative function of both heterodimers. This Bos taurus (Bovine) protein is Isocitrate dehydrogenase [NAD] subunit gamma, mitochondrial (IDH3G).